The primary structure comprises 71 residues: Ceratotoxin-A (71 aa).

The first 23 residues, 1–23 (MANLKAVFLICIVAFIAFQCVVA), serve as a signal peptide directing secretion. 2 consecutive propeptides follow at residues 24–35 (EPAAEDSIVVKR) and 65–71 (VAAGLVG).

As to quaternary structure, homomer of four to six subunits.

The protein resides in the secreted. In terms of biological role, female-specific peptides with potent activity against Gram-positive and Gram-negative bacteria. They have as well hemolytic activity. The chain is Ceratotoxin-A (CTXA2) from Ceratitis capitata (Mediterranean fruit fly).